A 150-amino-acid chain; its full sequence is UPF0756 membrane protein STH2648 (150 aa).

4 helical membrane-spanning segments follow: residues 13 to 33, 52 to 72, 85 to 105, and 111 to 131; these read ALGV…VLIL, AGLI…EVGW, LAAI…VTLL, and VIVG…GIPV.

It belongs to the UPF0756 family.

The protein resides in the cell membrane. This is UPF0756 membrane protein STH2648 from Symbiobacterium thermophilum (strain DSM 24528 / JCM 14929 / IAM 14863 / T).